We begin with the raw amino-acid sequence, 75 residues long: UPF0235 protein Mvan_2846 (75 aa).

Belongs to the UPF0235 family.

This chain is UPF0235 protein Mvan_2846, found in Mycolicibacterium vanbaalenii (strain DSM 7251 / JCM 13017 / BCRC 16820 / KCTC 9966 / NRRL B-24157 / PYR-1) (Mycobacterium vanbaalenii).